Reading from the N-terminus, the 363-residue chain is UDP-N-acetylglucosamine--N-acetylmuramyl-(pentapeptide) pyrophosphoryl-undecaprenol N-acetylglucosamine transferase (363 aa).

Residues 10–12, Asn-124, Ser-195, Ile-250, and Gln-295 each bind UDP-N-acetyl-alpha-D-glucosamine; that span reads TGG.

The protein belongs to the glycosyltransferase 28 family. MurG subfamily.

The protein resides in the cell membrane. It catalyses the reaction di-trans,octa-cis-undecaprenyl diphospho-N-acetyl-alpha-D-muramoyl-L-alanyl-D-glutamyl-meso-2,6-diaminopimeloyl-D-alanyl-D-alanine + UDP-N-acetyl-alpha-D-glucosamine = di-trans,octa-cis-undecaprenyl diphospho-[N-acetyl-alpha-D-glucosaminyl-(1-&gt;4)]-N-acetyl-alpha-D-muramoyl-L-alanyl-D-glutamyl-meso-2,6-diaminopimeloyl-D-alanyl-D-alanine + UDP + H(+). It participates in cell wall biogenesis; peptidoglycan biosynthesis. Cell wall formation. Catalyzes the transfer of a GlcNAc subunit on undecaprenyl-pyrophosphoryl-MurNAc-pentapeptide (lipid intermediate I) to form undecaprenyl-pyrophosphoryl-MurNAc-(pentapeptide)GlcNAc (lipid intermediate II). This Listeria welshimeri serovar 6b (strain ATCC 35897 / DSM 20650 / CCUG 15529 / CIP 8149 / NCTC 11857 / SLCC 5334 / V8) protein is UDP-N-acetylglucosamine--N-acetylmuramyl-(pentapeptide) pyrophosphoryl-undecaprenol N-acetylglucosamine transferase.